The sequence spans 91 residues: Small ribosomal subunit protein uS19 (91 aa).

This sequence belongs to the universal ribosomal protein uS19 family.

Protein S19 forms a complex with S13 that binds strongly to the 16S ribosomal RNA. The polypeptide is Small ribosomal subunit protein uS19 (Synechococcus sp. (strain WH7803)).